The primary structure comprises 88 residues: Sec-independent protein translocase protein TatA (88 aa).

The helical transmembrane segment at 1-21 threads the bilayer; that stretch reads MNLGPTEILLILVIVVLLFGA. The segment covering 46–56 has biased composition (basic and acidic residues); it reads SNDDQRYEEQQ. Positions 46-88 are disordered; that stretch reads SNDDQRYEEQQQQRQIAAQAQQQVVNPVEIPQPQPTDIQRPQQ. Over residues 57 to 68 the composition is skewed to low complexity; the sequence is QQRQIAAQAQQQ.

The protein belongs to the TatA/E family. The Tat system comprises two distinct complexes: a TatABC complex, containing multiple copies of TatA, TatB and TatC subunits, and a separate TatA complex, containing only TatA subunits. Substrates initially bind to the TatABC complex, which probably triggers association of the separate TatA complex to form the active translocon.

It localises to the cell membrane. Part of the twin-arginine translocation (Tat) system that transports large folded proteins containing a characteristic twin-arginine motif in their signal peptide across membranes. TatA could form the protein-conducting channel of the Tat system. This chain is Sec-independent protein translocase protein TatA, found in Corynebacterium diphtheriae (strain ATCC 700971 / NCTC 13129 / Biotype gravis).